Consider the following 39-residue polypeptide: Potassium channel toxin alpha-KTx 2.8 (39 aa).

Disulfide bonds link C7/C29, C13/C34, and C17/C36.

It belongs to the short scorpion toxin superfamily. Potassium channel inhibitor family. Alpha-KTx 02 subfamily. As to expression, expressed by the venom gland.

Its subcellular location is the secreted. Blocks Kv1.3/KCNA3 voltage-gated potassium channels of human T-lymphocytes (Kd=0.71 nM). This chain is Potassium channel toxin alpha-KTx 2.8, found in Centruroides elegans (Bark scorpion).